The sequence spans 405 residues: Argininosuccinate synthase (405 aa).

An ATP-binding site is contributed by Ala-12–Ser-20. Tyr-92 and Ser-97 together coordinate L-citrulline. Gly-122 contributes to the ATP binding site. Thr-124, Asn-128, and Asp-129 together coordinate L-aspartate. Residue Asn-128 participates in L-citrulline binding. L-citrulline-binding residues include Arg-132, Ser-181, Ser-190, Glu-266, and Tyr-278.

The protein belongs to the argininosuccinate synthase family. Type 1 subfamily. As to quaternary structure, homotetramer.

The protein resides in the cytoplasm. The enzyme catalyses L-citrulline + L-aspartate + ATP = 2-(N(omega)-L-arginino)succinate + AMP + diphosphate + H(+). It participates in amino-acid biosynthesis; L-arginine biosynthesis; L-arginine from L-ornithine and carbamoyl phosphate: step 2/3. The protein is Argininosuccinate synthase of Cronobacter sakazakii (strain ATCC BAA-894) (Enterobacter sakazakii).